The following is an 82-amino-acid chain: Small ribosomal subunit protein bS16 (82 aa).

Belongs to the bacterial ribosomal protein bS16 family.

The polypeptide is Small ribosomal subunit protein bS16 (Desulfosudis oleivorans (strain DSM 6200 / JCM 39069 / Hxd3) (Desulfococcus oleovorans)).